Consider the following 298-residue polypeptide: Protein REVEILLE 8 (298 aa).

Positions 1–44 are disordered; that stretch reads MSSSPSRNPTNAEAPPPPPTSTDAVAEGSSKKVRKPYTITKSRE. One can recognise an HTH myb-type domain in the interval 38 to 92; sequence TITKSRESWTEEEHDKFLEALQLFDRDWKKIEDFVGSKTVIQIRSHAQKYFLKVQ. A DNA-binding region (H-T-H motif) is located at residues 65-88; the sequence is WKKIEDFVGSKTVIQIRSHAQKYF. The interval 96–123 is disordered; it reads TLAHVPPPRPKRKAAHPYPQKASKNAQM.

It is found in the nucleus. Transcriptional activator of evening element (EE)-containing clock-controlled genes. Forms a negative feedback loop with APRR5. Regulates the pattern of histone H3 acetylation of the TOC1 promoter. RVE4, RVE6 and RVE8 are components of the circadian system acting synergistically to regulate flowering time, redundantly to regulate leaf growth, and antagonistically to regulate hypocotyl elongation; their action seems independent of ZTL and HY5. This chain is Protein REVEILLE 8, found in Arabidopsis thaliana (Mouse-ear cress).